The following is a 346-amino-acid chain: Low specificity L-threonine aldolase (346 aa).

N6-(pyridoxal phosphate)lysine is present on Lys-207.

This sequence belongs to the threonine aldolase family. Homotetramer. It depends on pyridoxal 5'-phosphate as a cofactor.

The catalysed reaction is L-threonine = acetaldehyde + glycine. The enzyme catalyses L-allo-threonine = acetaldehyde + glycine. In terms of biological role, catalyzes the cleavage of L-allo-threonine and L-threonine to glycine and acetaldehyde. Can also act on L-erythro-phenylserine, L-threo-phenylserine, L-beta-3,4-methylenedioxyphenylserine and L-beta-3,4-dihydroxyphenylserine. The protein is Low specificity L-threonine aldolase (ltaE) of Pseudomonas sp. (strain NCIMB 10558).